A 299-amino-acid polypeptide reads, in one-letter code: J domain-containing protein CG6693 (299 aa).

Residues 15-82 (DVYKLMELAR…QKRALYDEQG (68 aa)) enclose the J domain. Ser-239 carries the phosphoserine modification. The tract at residues 266–299 (FEKKKKKSKKPAAKQETKPKLNGVKAGRVEKGKN) is disordered. A compositionally biased stretch (basic residues) spans 268–277 (KKKKKSKKPA).

The chain is J domain-containing protein CG6693 from Drosophila melanogaster (Fruit fly).